The chain runs to 342 residues: N-acetyl-gamma-glutamyl-phosphate reductase (342 aa).

The active site involves cysteine 146.

Belongs to the NAGSA dehydrogenase family. Type 1 subfamily.

Its subcellular location is the cytoplasm. The enzyme catalyses N-acetyl-L-glutamate 5-semialdehyde + phosphate + NADP(+) = N-acetyl-L-glutamyl 5-phosphate + NADPH + H(+). It functions in the pathway amino-acid biosynthesis; L-arginine biosynthesis; N(2)-acetyl-L-ornithine from L-glutamate: step 3/4. In terms of biological role, catalyzes the NADPH-dependent reduction of N-acetyl-5-glutamyl phosphate to yield N-acetyl-L-glutamate 5-semialdehyde. In Saccharopolyspora erythraea (strain ATCC 11635 / DSM 40517 / JCM 4748 / NBRC 13426 / NCIMB 8594 / NRRL 2338), this protein is N-acetyl-gamma-glutamyl-phosphate reductase.